A 254-amino-acid polypeptide reads, in one-letter code: NH(3)-dependent NAD(+) synthetase (254 aa).

Gly-32 to Ser-39 is a binding site for ATP. Asp-38 serves as a coordination point for Mg(2+). A deamido-NAD(+)-binding site is contributed by Arg-113. Residue Thr-133 participates in ATP binding. Position 138 (Glu-138) interacts with Mg(2+). Deamido-NAD(+) contacts are provided by Lys-146 and Asp-153. 2 residues coordinate ATP: Lys-162 and Thr-184. Residue His-244 to Lys-245 participates in deamido-NAD(+) binding.

It belongs to the NAD synthetase family. As to quaternary structure, homodimer.

It catalyses the reaction deamido-NAD(+) + NH4(+) + ATP = AMP + diphosphate + NAD(+) + H(+). The protein operates within cofactor biosynthesis; NAD(+) biosynthesis; NAD(+) from deamido-NAD(+) (ammonia route): step 1/1. In terms of biological role, catalyzes the ATP-dependent amidation of deamido-NAD to form NAD. Uses ammonia as a nitrogen source. This Thermococcus kodakarensis (strain ATCC BAA-918 / JCM 12380 / KOD1) (Pyrococcus kodakaraensis (strain KOD1)) protein is NH(3)-dependent NAD(+) synthetase.